The following is a 556-amino-acid chain: Potassium-transporting ATPase potassium-binding subunit (556 aa).

A run of 12 helical transmembrane segments spans residues 3–23, 57–77, 129–149, 172–192, 247–267, 278–298, 319–339, 346–366, 371–391, 408–428, 486–506, and 516–536; these read AHGV…TPIL, AAYA…LYAL, GLTV…VALM, LGLL…QGVP, LVNL…TNTF, WALL…AWWA, LGVA…CGAV, LLPL…VVVG, GLYG…LMVG, LAVI…GLAI, FVVM…MAVP, and GWLF…LTYF.

Belongs to the KdpA family. As to quaternary structure, the system is composed of three essential subunits: KdpA, KdpB and KdpC.

It localises to the cell inner membrane. Functionally, part of the high-affinity ATP-driven potassium transport (or Kdp) system, which catalyzes the hydrolysis of ATP coupled with the electrogenic transport of potassium into the cytoplasm. This subunit binds the periplasmic potassium ions and delivers the ions to the membrane domain of KdpB through an intramembrane tunnel. This chain is Potassium-transporting ATPase potassium-binding subunit, found in Paramagnetospirillum magneticum (strain ATCC 700264 / AMB-1) (Magnetospirillum magneticum).